The sequence spans 1173 residues: Tectonin beta-propeller repeat-containing protein 1 (1173 aa).

4 TECPR repeats span residues 210 to 239 (SVWA…WSLI), 254 to 285 (DLLW…STVE), 301 to 332 (DVVW…IEMV), and 344 to 376 (NQVW…KAIV). Over residues 413–430 (GDADTSSDTELSSIPTNL) the composition is skewed to polar residues. Positions 413-495 (GDADTSSDTE…STNPTPSTEL (83 aa)) are disordered. The segment covering 431–456 (SSTPPMGAAASSASSTGSQAAGAPAS) has biased composition (low complexity). Basic and acidic residues predominate over residues 475-485 (SDEKAHLESRK). Polar residues predominate over residues 486–495 (STNPTPSTEL). A PH domain is found at 618–727 (VWVKTGMLQW…WLSLLTMSCC (110 aa)). TECPR repeat units follow at residues 739–766 (HAIW…PHPM), 962–991 (ALWA…WLHV), 1007–1037 (QVWA…YHIP), 1053–1083 (SVFV…DHVS), and 1095–1135 (DQVW…DYGI). Positions 1147–1173 (NASQAPRGTVPSESPPEPMESEGRVMC) are disordered.

The protein belongs to the TECPR1 family.

The protein resides in the cytoplasmic vesicle. Its subcellular location is the autophagosome membrane. It is found in the lysosome membrane. Its function is as follows. Tethering factor involved in autophagy. Involved in autophagosome maturation by promoting the autophagosome fusion with lysosomes. Binds phosphatidylinositol-3-phosphate (PtdIns(3)P) present at the surface of autophagosomes. The protein is Tectonin beta-propeller repeat-containing protein 1 (TECPR1) of Gallus gallus (Chicken).